A 253-amino-acid polypeptide reads, in one-letter code: Aminoglycoside nucleotidyltransferase (4') (253 aa).

As to quaternary structure, homodimer.

The enzyme catalyses kanamycin A + ATP = 4'-adenylylkanamycin A + diphosphate. The catalysed reaction is amikacin + ATP = 4'-adenylylamikacin + diphosphate. It catalyses the reaction neomycin B + ATP = 4'-adenylylneomycin B + diphosphate. It carries out the reaction paromomycin + ATP = 4'-adenylylparomomycin + diphosphate. The enzyme catalyses ribostamycin + ATP = 4'-adenylylribostamycin + diphosphate. The catalysed reaction is tobramycin + ATP = 4'-adenylyltobramycin + diphosphate. It catalyses the reaction kanamycin A + CTP = 4'-cytidylylkanamycin A + diphosphate. It carries out the reaction kanamycin A + GTP = 4'-guanylylkanamycin A + diphosphate. The enzyme catalyses kanamycin A + ITP = 4'-inosinylylkanamycin A + diphosphate. The catalysed reaction is dTTP + kanamycin A = 4'-thymidylylkanamycin A + diphosphate. It catalyses the reaction kanamycin A + UTP = 4'-uridylylkanamycin A + diphosphate. It carries out the reaction kanamycin A + dATP = 4'-(2'-deoxyadenylyl)kanamycin A + diphosphate. The enzyme catalyses kanamycin A + dCTP = 4'-(2'-deoxycytidylyl)kanamycin A + diphosphate. The catalysed reaction is kanamycin A + dGTP = 4'-(2'-deoxyguanylyl)kanamycin A + diphosphate. It catalyses the reaction dUTP + kanamycin A = 4'-(2'-deoxyuridylyl)kanamycin A + diphosphate. It carries out the reaction amikacin + GTP = 4'-guanylylamikacin + diphosphate. The enzyme catalyses amikacin + ITP = 4'-inosinylylamikacin + diphosphate. The catalysed reaction is amikacin + CTP = 4'-cytidylylamikacin + diphosphate. It catalyses the reaction amikacin + UTP = 4'-uridylylamikacin + diphosphate. It carries out the reaction amikacin + dTTP = 4'-thymidylylamikacin + diphosphate. Its function is as follows. Inactivates aminoglycoside antibiotics such as kanamycin by catalyzing the transfer of a nucleotidyl group from nucleoside triphosphates such as (d)ATP to the 4'-hydroxyl group of the aminoglycoside. This chain is Aminoglycoside nucleotidyltransferase (4'), found in Bacillus sp.